A 2504-amino-acid chain; its full sequence is Fatty acid synthase (2504 aa).

Methionine 1 is modified (N-acetylmethionine). The region spanning 1-406 (MEEVVIAGMS…GSNVHVILQP (406 aa)) is the Ketosynthase family 3 (KS3) domain. Lysine 59 carries the post-translational modification N6-acetyllysine. Serine 63 is subject to Phosphoserine. Residue lysine 70 is modified to N6-acetyllysine. The active-site For beta-ketoacyl synthase activity is the cysteine 161. Position 207 is a phosphoserine (serine 207). Catalysis depends on histidine 293, which acts as the For beta-ketoacyl synthase activity. Lysine 298 bears the N6-acetyllysine mark. The For beta-ketoacyl synthase activity role is filled by histidine 331. Residues 429–817 (RTLEAVQDLL…INVNPNALFP (389 aa)) are acyl and malonyl transferases. Lysine 528 bears the N6-acetyllysine mark. Catalysis depends on serine 581, which acts as the For malonyltransferase activity. Residues 647-648 (DT) and phenylalanine 671 contribute to the an acyl-CoA site. An N6-acetyllysine modification is found at lysine 673. Serine 725 is modified (phosphoserine). Residue arginine 773 participates in an acyl-CoA binding. Residue lysine 790 is modified to N6-acetyllysine. The N-terminal hotdog fold stretch occupies residues 844–967 (VPVAEDFPNG…VYLWEDPNSK (124 aa)). Residues 844-1104 (VPVAEDFPNG…ISRLQTTATS (261 aa)) form the PKS/mFAS DH domain. Histidine 878 (proton acceptor; for dehydratase activity) is an active-site residue. Residues 982-1104 (SVSRLTQGEV…ISRLQTTATS (123 aa)) are C-terminal hotdog fold. Lysine 993 is modified (N6-acetyllysine). Catalysis depends on aspartate 1032, which acts as the Proton donor; for dehydratase activity. N6-acetyllysine occurs at positions 1071 and 1276. Cysteine 1464 is subject to S-nitrosocysteine. Serine 1577 and serine 1587 each carry phosphoserine. The interval 1628–1856 (DVPSSWTLEE…VQVREEEPEA (229 aa)) is enoyl reductase. Residue 1664–1681 (VLIHSGSGGVGQAAISIA) participates in NADP(+) binding. An N6-(pyridoxal phosphate)lysine; alternate modification is found at lysine 1697. Lysine 1697 carries the post-translational modification N6-acetyllysine; alternate. Residues lysine 1764 and lysine 1840 each carry the N6-acetyllysine modification. The segment at 1857-2111 (VLPGAQPTLI…FVLAEKKAVA (255 aa)) is beta-ketoacyl reductase. NADP(+) is bound at residue 1879-1894 (SYIITGGLGGFGLELA). Position 1988 is an N6-acetyllysine (lysine 1988). Cysteine 2084 carries the S-nitrosocysteine modification. The Carrier domain occupies 2112 to 2192 (HGDGDTQRDL…EMSSKTDSAT (81 aa)). An O-(pantetheine 4'-phosphoryl)serine; alternate modification is found at serine 2150. Serine 2150 carries the phosphoserine; alternate modification. The segment at 2181–2205 (LQEMSSKTDSATDTTAPKSRSDTSL) is disordered. Residues 2185–2198 (SSKTDSATDTTAPK) are compositionally biased toward low complexity. 2 positions are modified to phosphoserine: serine 2190 and serine 2229. Residues 2201-2504 (SDTSLKQNQL…AEPRVSVREG (304 aa)) are thioesterase. Serine 2301 acts as the For thioesterase activity in catalysis. Lysine 2384 is subject to N6-acetyllysine. A Glycyl lysine isopeptide (Lys-Gly) (interchain with G-Cter in SUMO2) cross-link involves residue lysine 2442. Histidine 2474 (for thioesterase activity) is an active-site residue.

In terms of assembly, homodimer which is arranged in a head to tail fashion. Interacts with CEACAM1; this interaction is insulin and phosphorylation-dependent; reduces fatty-acid synthase activity. S-nitrosylation of Fatty acid synthase at cysteine residues Cys-1464 or Cys-2084 is important for the enzyme dimerization. In adipocytes, S-nitrosylation of Fatty acid synthase occurs under physiological conditions and gradually increases during adipogenesis.

Its subcellular location is the cytoplasm. The protein localises to the melanosome. It catalyses the reaction acetyl-CoA + n malonyl-CoA + 2n NADPH + 2n H(+) = a long-chain fatty acid + (n+1) CoA + n CO2 + 2n NADP(+).. The catalysed reaction is holo-[ACP] + acetyl-CoA = acetyl-[ACP] + CoA. It carries out the reaction holo-[ACP] + malonyl-CoA = malonyl-[ACP] + CoA. The enzyme catalyses a fatty acyl-[ACP] + malonyl-[ACP] + H(+) = a 3-oxoacyl-[ACP] + holo-[ACP] + CO2. It catalyses the reaction a (3R)-hydroxyacyl-[ACP] + NADP(+) = a 3-oxoacyl-[ACP] + NADPH + H(+). The catalysed reaction is a (3R)-hydroxyacyl-[ACP] = a (2E)-enoyl-[ACP] + H2O. It carries out the reaction a 2,3-saturated acyl-[ACP] + NADP(+) = a (2E)-enoyl-[ACP] + NADPH + H(+). The enzyme catalyses hexadecanoyl-[ACP] + H2O = hexadecanoate + holo-[ACP] + H(+). It catalyses the reaction acetyl-[ACP] + malonyl-[ACP] + H(+) = 3-oxobutanoyl-[ACP] + holo-[ACP] + CO2. The catalysed reaction is 3-oxobutanoyl-[ACP] + NADPH + H(+) = (3R)-hydroxybutanoyl-[ACP] + NADP(+). It carries out the reaction (3R)-hydroxybutanoyl-[ACP] = (2E)-butenoyl-[ACP] + H2O. The enzyme catalyses (2E)-butenoyl-[ACP] + NADPH + H(+) = butanoyl-[ACP] + NADP(+). It catalyses the reaction butanoyl-[ACP] + malonyl-[ACP] + H(+) = 3-oxohexanoyl-[ACP] + holo-[ACP] + CO2. The catalysed reaction is 3-oxohexanoyl-[ACP] + NADPH + H(+) = (3R)-hydroxyhexanoyl-[ACP] + NADP(+). It carries out the reaction (3R)-hydroxyhexanoyl-[ACP] = (2E)-hexenoyl-[ACP] + H2O. The enzyme catalyses (2E)-hexenoyl-[ACP] + NADPH + H(+) = hexanoyl-[ACP] + NADP(+). It catalyses the reaction hexanoyl-[ACP] + malonyl-[ACP] + H(+) = 3-oxooctanoyl-[ACP] + holo-[ACP] + CO2. The catalysed reaction is 3-oxooctanoyl-[ACP] + NADPH + H(+) = (3R)-hydroxyoctanoyl-[ACP] + NADP(+). It carries out the reaction (3R)-hydroxyoctanoyl-[ACP] = (2E)-octenoyl-[ACP] + H2O. The enzyme catalyses (2E)-octenoyl-[ACP] + NADPH + H(+) = octanoyl-[ACP] + NADP(+). It catalyses the reaction octanoyl-[ACP] + malonyl-[ACP] + H(+) = 3-oxodecanoyl-[ACP] + holo-[ACP] + CO2. The catalysed reaction is 3-oxodecanoyl-[ACP] + NADPH + H(+) = (3R)-hydroxydecanoyl-[ACP] + NADP(+). It carries out the reaction (3R)-hydroxydecanoyl-[ACP] = (2E)-decenoyl-[ACP] + H2O. The enzyme catalyses (2E)-decenoyl-[ACP] + NADPH + H(+) = decanoyl-[ACP] + NADP(+). It catalyses the reaction decanoyl-[ACP] + malonyl-[ACP] + H(+) = 3-oxododecanoyl-[ACP] + holo-[ACP] + CO2. The catalysed reaction is 3-oxododecanoyl-[ACP] + NADPH + H(+) = (3R)-hydroxydodecanoyl-[ACP] + NADP(+). It carries out the reaction (3R)-hydroxydodecanoyl-[ACP] = (2E)-dodecenoyl-[ACP] + H2O. The enzyme catalyses (2E)-dodecenoyl-[ACP] + NADPH + H(+) = dodecanoyl-[ACP] + NADP(+). It catalyses the reaction dodecanoyl-[ACP] + malonyl-[ACP] + H(+) = 3-oxotetradecanoyl-[ACP] + holo-[ACP] + CO2. The catalysed reaction is 3-oxotetradecanoyl-[ACP] + NADPH + H(+) = (3R)-hydroxytetradecanoyl-[ACP] + NADP(+). It carries out the reaction (3R)-hydroxytetradecanoyl-[ACP] = (2E)-tetradecenoyl-[ACP] + H2O. The enzyme catalyses (2E)-tetradecenoyl-[ACP] + NADPH + H(+) = tetradecanoyl-[ACP] + NADP(+). It catalyses the reaction tetradecanoyl-[ACP] + malonyl-[ACP] + H(+) = 3-oxohexadecanoyl-[ACP] + holo-[ACP] + CO2. The catalysed reaction is 3-oxohexadecanoyl-[ACP] + NADPH + H(+) = (3R)-hydroxyhexadecanoyl-[ACP] + NADP(+). It carries out the reaction (3R)-hydroxyhexadecanoyl-[ACP] = (2E)-hexadecenoyl-[ACP] + H2O. The enzyme catalyses (2E)-hexadecenoyl-[ACP] + NADPH + H(+) = hexadecanoyl-[ACP] + NADP(+). It catalyses the reaction hexadecanoyl-[ACP] + malonyl-[ACP] + H(+) = 3-oxooctadecanoyl-[ACP] + holo-[ACP] + CO2. The catalysed reaction is 3-oxooctadecanoyl-[ACP] + NADPH + H(+) = (3R)-hydroxyoctadecanoyl-[ACP] + NADP(+). It carries out the reaction (3R)-hydroxyoctadecanoyl-[ACP] = (2E)-octadecenoyl-[ACP] + H2O. The enzyme catalyses (2E)-octadecenoyl-[ACP] + NADPH + H(+) = octadecanoyl-[ACP] + NADP(+). It catalyses the reaction tetradecanoyl-[ACP] + H2O = tetradecanoate + holo-[ACP] + H(+). It functions in the pathway lipid metabolism; fatty acid biosynthesis. Its function is as follows. Fatty acid synthetase is a multifunctional enzyme that catalyzes the de novo biosynthesis of long-chain saturated fatty acids starting from acetyl-CoA and malonyl-CoA in the presence of NADPH. This multifunctional protein contains 7 catalytic activities and a site for the binding of the prosthetic group 4'-phosphopantetheine of the acyl carrier protein ([ACP]) domain. The chain is Fatty acid synthase (Fasn) from Mus musculus (Mouse).